Reading from the N-terminus, the 327-residue chain is Apoptosis facilitator Bcl-2-like protein 14 (327 aa).

Ser-44 carries the post-translational modification Phosphoserine. The BH3 signature appears at Ile-212–Lys-226. A BH2 motif is present at residues Trp-308–Trp-315.

The protein belongs to the Bcl-2 family. Phosphorylated by MELK, leading to inhibit its pro-apoptotic function. As to expression, isoform 1 is widely expressed. Isoform 2 is testis-specific.

The protein localises to the cytoplasm. The protein resides in the cytosol. It is found in the endomembrane system. Functionally, plays a role in apoptosis. This is Apoptosis facilitator Bcl-2-like protein 14 (BCL2L14) from Homo sapiens (Human).